A 299-amino-acid polypeptide reads, in one-letter code: Putative hydrolase YtaP (299 aa).

It belongs to the dienelactone hydrolase family.

The polypeptide is Putative hydrolase YtaP (ytaP) (Bacillus subtilis (strain 168)).